A 632-amino-acid chain; its full sequence is POU domain, class 2, transcription factor 1 (632 aa).

A phosphothreonine mark is found at Thr157 and Thr163. Positions 167–241 constitute a POU-specific domain; it reads EEPSDLEELE…LLEKWLNDAE (75 aa). Phosphoserine is present on Ser170. Over residues 243–258 the composition is skewed to low complexity; that stretch reads LSSDSTASSPSALNSP. The tract at residues 243–273 is disordered; it reads LSSDSTASSPSALNSPGLGAEGLNRRRKKRT. A DNA-binding region (homeobox) is located at residues 268 to 327; that stretch reads RRKKRTSIETNIRVALEKSFMENQKPTSEDITLIAEQLNMEKEVIRVWFCNRRQKEKRIN. A phosphoserine mark is found at Ser274 and Ser337. The interval 385–448 is disordered; the sequence is GTTDSTSNNT…STPLPSPLGA (64 aa). A compositionally biased stretch (low complexity) spans 394-441; sequence TATVISTAPPASSAVTSPSLSPSPSASASTSEASSASETSTTQTTSTP.

Belongs to the POU transcription factor family. Class-2 subfamily. As to quaternary structure, interacts with POU2AF1; the interaction increases POU2F1 transactivation activity. Interacts with NR3C1, AR, PGR and HCFC1. Post-translationally, phosphorylated by PRKDC. In terms of tissue distribution, widely expressed.

The protein resides in the nucleus. In terms of biological role, transcription factor that binds to the octamer motif (5'-ATTTGCAT-3') and activates the promoters of the genes for some small nuclear RNAs (snRNA) and of genes such as those for histone H2B and immunoglobulins. Modulates transcription transactivation by NR3C1, AR and PGR. The polypeptide is POU domain, class 2, transcription factor 1 (Pou2f1) (Rattus norvegicus (Rat)).